Reading from the N-terminus, the 365-residue chain is Peptide chain release factor 2 (365 aa).

Gln-252 carries the post-translational modification N5-methylglutamine.

This sequence belongs to the prokaryotic/mitochondrial release factor family. Methylated by PrmC. Methylation increases the termination efficiency of RF2.

The protein resides in the cytoplasm. Its function is as follows. Peptide chain release factor 2 directs the termination of translation in response to the peptide chain termination codons UGA and UAA. This is Peptide chain release factor 2 from Escherichia coli (strain K12 / MC4100 / BW2952).